We begin with the raw amino-acid sequence, 207 residues long: C-type lectin domain family 2 member D (207 aa).

Residues 1 to 41 (MCVTKASLPMLSPTGSPQEVEVGKILQGKRHGTISPESCAK) are Cytoplasmic-facing. Serine 7 and serine 12 each carry phosphoserine. Residues 42–62 (LYCYYGVIMVLTVAVIALSVA) traverse the membrane as a helical; Signal-anchor for type II membrane protein segment. Topologically, residues 63–207 (LSATKTEQIP…LHCQTPFFPS (145 aa)) are extracellular. Residues cysteine 80 and cysteine 91 are joined by a disulfide bond. In terms of domain architecture, C-type lectin spans 87–202 (VENKCFYFSE…LNSYSLHCQT (116 aa)). N-linked (GlcNAc...) asparagine glycosylation is present at asparagine 100.

In terms of assembly, homodimer; disulfide-linked. In terms of processing, N-glycosylated. Detected in fetal heart, brain, lung, chondrocytes, perichondrium and osteoblasts, and in adult splenocytes, thymocytes, lymph-node cells, osteoblasts, growth plate chondrocytes and skeletal muscle overlying the bone (at protein level). Ubiquitous. Detected in thymus, bone marrow, lung, gut, heart, skeletal muscle, ovary, spleen, ileum, liver and kidney.

It is found in the cell membrane. Its function is as follows. Receptor for KLRB1B that protects target cells against natural killer cell-mediated lysis. Inhibits osteoclast formation. Binds high molecular weight sulfated glycosaminoglycans. In Mus musculus (Mouse), this protein is C-type lectin domain family 2 member D (Clec2d).